Consider the following 512-residue polypeptide: MLTMGTALSQQVDANWQTYIMIAVYFLILIVIGFYGYKQATGNLSEYMLGGRSIGPYITALSAGASDMSGWMIMELPGSVYSTGLSAMWITIGLTLGAYINYFVVAPRLRVYTELAGDAITLPDFFKNRLNDKNNVLKIISGLIIVVFFTLYTHSGFVSGGKLFESAFGLDYHFGLILVAFIVIFYTFFGGYLAVSITDFFQGVIMLIAMVMVPIVAMMNLNGWGTFHDVAAMKPTNLNLFKGLSFIGIISLFSWGLGYFGQPHIIVRFMSIKSHKMLPKARRLGISWMAVGLLGAVAVGLTGIAFVPAYHIKLEDPETLFIVMSQVLFHPLVGGFLLAAILAAIMSTISSQLLVTSSSLTEDFYKLIRGEEKAKTHQKEFVMIGRLSVLVVAIVAIAIAWNPNDTILNLVGNAWAGFGASFSPLVLFALYWKGLTRAGAVSGMVSGALVVIVWIAWIKPLAHINEIFGLYEIIPGFIVSVIVTYVVSKLTKKPGAFVETDLNKVRDIVREK.

The next 13 helical transmembrane spans lie at 16-36 (WQTYIMIAVYFLILIVIGFYG), 54-74 (IGPYITALSAGASDMSGWMIM), 85-105 (LSAMWITIGLTLGAYINYFVV), 139-159 (IISGLIIVVFFTLYTHSGFVS), 174-194 (FGLILVAFIVIFYTFFGGYLA), 200-220 (FFQGVIMLIAMVMVPIVAMMN), 240-260 (LFKGLSFIGIISLFSWGLGYF), 286-306 (ISWMAVGLLGAVAVGLTGIAF), 327-347 (VLFHPLVGGFLLAAILAAIMS), 381-401 (FVMIGRLSVLVVAIVAIAIAW), 410-430 (LVGNAWAGFGASFSPLVLFAL), 438-458 (AGAVSGMVSGALVVIVWIAWI), and 467-487 (IFGLYEIIPGFIVSVIVTYVV).

The protein belongs to the sodium:solute symporter (SSF) (TC 2.A.21) family.

The protein localises to the cell membrane. The enzyme catalyses L-proline(in) + Na(+)(in) = L-proline(out) + Na(+)(out). Catalyzes the sodium-dependent uptake of extracellular L-proline. Since most S.aureus strains are L-proline auxotrophs, this transporter may aid the bacterial persistence during an infection of tissues with low proline concentrations. This chain is Sodium/proline symporter (putP), found in Staphylococcus aureus (strain Newman).